Consider the following 353-residue polypeptide: UPF0283 membrane protein YcjF (353 aa).

The segment covering 1–19 (MSEPLKPRIDFAEPLKEEP) has biased composition (basic and acidic residues). Positions 1–35 (MSEPLKPRIDFAEPLKEEPTSAFKAQQTFSEAESR) are disordered. Transmembrane regions (helical) follow at residues 70–90 (MVMGGLALFGASVVGQGVQWT), 100–120 (VALGGCAAGALIIGAGVGSVV), and 213–233 (ESTLMIVVSPLALVDMAFIAW).

The protein belongs to the UPF0283 family.

It localises to the cell inner membrane. The chain is UPF0283 membrane protein YcjF from Salmonella newport (strain SL254).